The following is a 142-amino-acid chain: Endoribonuclease YbeY (142 aa).

Zn(2+)-binding residues include histidine 107, histidine 111, and aspartate 117.

It belongs to the endoribonuclease YbeY family. Zn(2+) is required as a cofactor.

Its subcellular location is the cytoplasm. Single strand-specific metallo-endoribonuclease involved in late-stage 70S ribosome quality control and in maturation of the 3' terminus of the 16S rRNA. This chain is Endoribonuclease YbeY, found in Chlorobium phaeobacteroides (strain DSM 266 / SMG 266 / 2430).